The primary structure comprises 847 residues: Guanine nucleotide exchange factor VAV3 (847 aa).

In terms of domain architecture, Calponin-homology (CH) spans 1 to 119; that stretch reads MEPWKQCAQW…ETLSRLSRTP (119 aa). Tyr-141 is modified (phosphotyrosine). The DH domain occupies 192–371; that stretch reads IRSCCLAEIK…KDLAQYVNEV (180 aa). In terms of domain architecture, PH spans 400-502; it reads RPQGDGEIRI…WLEQFEMALS (103 aa). Residues 513–562 form a Phorbol-ester/DAG-type zinc finger; it reads FHDFKMHTFTRVTSCKVCQMLLRGTFYQGYLCFKCGARAHKECLGRVDNC. Residues 560–847 are sufficient for interaction with ROS1; that stretch reads DNCGRVNSGE…FPSTYVEEDE (288 aa). Residues 592 to 660 enclose the SH3 1 domain; it reads PGLPKMQVIR…PSDAVKPCPC (69 aa). The SH2 domain occupies 672-766; the sequence is WYAGAMERLQ…TLDTTLQFPY (95 aa). One can recognise an SH3 2 domain in the interval 788–847; the sequence is KVLGIAIARYDFCARDMRELSLLKGDVVKIYTKMSANGWWRGEVNGRVGWFPSTYVEEDE.

In terms of assembly, interacts with the PH domain of SH2B2. Interacts (via SH2 domains) with the phosphorylated form of EPHA2. Interacts with ROS1; constitutive interaction that mediates VAV3 phosphorylation. Phosphorylated. Phosphorylation can be mediated by ROS1. In osteoclasts, undergoes tyrosine phosphorylation in response to CSF1. Isoform 1 and isoform 3 are widely expressed; both are expressed at very low levels in skeletal muscle. In keratinocytes, isoform 1 is less abundant than isoform 3. Isoform 3 is detected at very low levels, if any, in adrenal gland, bone marrow, spleen, fetal brain and spinal cord; in these tissues, isoform 1 is readily detectable.

Its function is as follows. Exchange factor for GTP-binding proteins RhoA, RhoG and, to a lesser extent, Rac1. Binds physically to the nucleotide-free states of those GTPases. Plays an important role in angiogenesis. Its recruitment by phosphorylated EPHA2 is critical for EFNA1-induced RAC1 GTPase activation and vascular endothelial cell migration and assembly. May be important for integrin-mediated signaling, at least in some cell types. In osteoclasts, along with SYK tyrosine kinase, required for signaling through integrin alpha-v/beta-1 (ITAGV-ITGB1), a crucial event for osteoclast proper cytoskeleton organization and function. This signaling pathway involves RAC1, but not RHO, activation. Necessary for proper wound healing. In the course of wound healing, required for the phagocytotic cup formation preceding macrophage phagocytosis of apoptotic neutrophils. Responsible for integrin beta-2 (ITGB2)-mediated macrophage adhesion and, to a lesser extent, contributes to beta-3 (ITGB3)-mediated adhesion. Does not affect integrin beta-1 (ITGB1)-mediated adhesion. This is Guanine nucleotide exchange factor VAV3 (VAV3) from Homo sapiens (Human).